Reading from the N-terminus, the 442-residue chain is Histidinol dehydrogenase (442 aa).

NAD(+) is bound by residues tyrosine 138, glutamine 199, and asparagine 222. Serine 245, glutamine 267, and histidine 270 together coordinate substrate. 2 residues coordinate Zn(2+): glutamine 267 and histidine 270. Catalysis depends on proton acceptor residues glutamate 335 and histidine 336. Positions 336, 369, 423, and 428 each coordinate substrate. Aspartate 369 serves as a coordination point for Zn(2+). Zn(2+) is bound at residue histidine 428.

It belongs to the histidinol dehydrogenase family. Requires Zn(2+) as cofactor.

It carries out the reaction L-histidinol + 2 NAD(+) + H2O = L-histidine + 2 NADH + 3 H(+). It functions in the pathway amino-acid biosynthesis; L-histidine biosynthesis; L-histidine from 5-phospho-alpha-D-ribose 1-diphosphate: step 9/9. In terms of biological role, catalyzes the sequential NAD-dependent oxidations of L-histidinol to L-histidinaldehyde and then to L-histidine. In Ralstonia nicotianae (strain ATCC BAA-1114 / GMI1000) (Ralstonia solanacearum), this protein is Histidinol dehydrogenase.